A 176-amino-acid polypeptide reads, in one-letter code: MEKRLERAMFAGGCFWCMVQPFDKQPGIESVVSGYAGGTVENPTYEQVKTGTTGHYEVVHITYVPELFPFEKLLSLYWPQIDPTDPDGQFHDRGPQYRTAIFYENEEQRALAERSREALEKSGKFKKPIVTSILPMATFYPAEEEHQQFYKKNPMAYKEDREKSGRDEFIYKHWGK.

Residue C14 is part of the active site.

Belongs to the MsrA Met sulfoxide reductase family.

The catalysed reaction is L-methionyl-[protein] + [thioredoxin]-disulfide + H2O = L-methionyl-(S)-S-oxide-[protein] + [thioredoxin]-dithiol. It catalyses the reaction [thioredoxin]-disulfide + L-methionine + H2O = L-methionine (S)-S-oxide + [thioredoxin]-dithiol. In terms of biological role, has an important function as a repair enzyme for proteins that have been inactivated by oxidation. Catalyzes the reversible oxidation-reduction of methionine sulfoxide in proteins to methionine. This chain is Peptide methionine sulfoxide reductase MsrA, found in Halalkalibacterium halodurans (strain ATCC BAA-125 / DSM 18197 / FERM 7344 / JCM 9153 / C-125) (Bacillus halodurans).